Consider the following 473-residue polypeptide: Photosystem II CP43 reaction center protein (473 aa).

Residues Met-1–Glu-14 constitute a propeptide that is removed on maturation. At Thr-15 the chain carries N-acetylthreonine. Phosphothreonine is present on Thr-15. The next 5 membrane-spanning stretches (helical) occupy residues Leu-69–Ala-93, Leu-134–Asn-155, Lys-178–Thr-200, Lys-255–Ser-275, and Trp-291–Ala-312. Glu-367 is a binding site for [CaMn4O5] cluster. Residues Arg-447–Pro-471 form a helical membrane-spanning segment.

It belongs to the PsbB/PsbC family. PsbC subfamily. PSII is composed of 1 copy each of membrane proteins PsbA, PsbB, PsbC, PsbD, PsbE, PsbF, PsbH, PsbI, PsbJ, PsbK, PsbL, PsbM, PsbT, PsbX, PsbY, PsbZ, Psb30/Ycf12, at least 3 peripheral proteins of the oxygen-evolving complex and a large number of cofactors. It forms dimeric complexes. Binds multiple chlorophylls and provides some of the ligands for the Ca-4Mn-5O cluster of the oxygen-evolving complex. It may also provide a ligand for a Cl- that is required for oxygen evolution. PSII binds additional chlorophylls, carotenoids and specific lipids. is required as a cofactor.

Its subcellular location is the plastid. It is found in the chloroplast thylakoid membrane. One of the components of the core complex of photosystem II (PSII). It binds chlorophyll and helps catalyze the primary light-induced photochemical processes of PSII. PSII is a light-driven water:plastoquinone oxidoreductase, using light energy to abstract electrons from H(2)O, generating O(2) and a proton gradient subsequently used for ATP formation. The sequence is that of Photosystem II CP43 reaction center protein from Draba nemorosa (Woodland whitlowgrass).